We begin with the raw amino-acid sequence, 59 residues long: Large ribosomal subunit protein uL30 (59 aa).

Belongs to the universal ribosomal protein uL30 family. As to quaternary structure, part of the 50S ribosomal subunit.

The sequence is that of Large ribosomal subunit protein uL30 from Aeromonas hydrophila subsp. hydrophila (strain ATCC 7966 / DSM 30187 / BCRC 13018 / CCUG 14551 / JCM 1027 / KCTC 2358 / NCIMB 9240 / NCTC 8049).